A 122-amino-acid polypeptide reads, in one-letter code: Large ribosomal subunit protein uL14 (122 aa).

Belongs to the universal ribosomal protein uL14 family. Part of the 50S ribosomal subunit. Forms a cluster with proteins L3 and L19. In the 70S ribosome, L14 and L19 interact and together make contacts with the 16S rRNA in bridges B5 and B8.

Functionally, binds to 23S rRNA. Forms part of two intersubunit bridges in the 70S ribosome. This is Large ribosomal subunit protein uL14 from Saccharopolyspora erythraea (strain ATCC 11635 / DSM 40517 / JCM 4748 / NBRC 13426 / NCIMB 8594 / NRRL 2338).